A 585-amino-acid polypeptide reads, in one-letter code: A-type ATP synthase subunit A (585 aa).

231–238 (GPFGSGKT) contributes to the ATP binding site.

It belongs to the ATPase alpha/beta chains family. As to quaternary structure, has multiple subunits with at least A(3), B(3), C, D, E, F, H, I and proteolipid K(x).

It localises to the cell membrane. The enzyme catalyses ATP + H2O + 4 H(+)(in) = ADP + phosphate + 5 H(+)(out). Its function is as follows. Component of the A-type ATP synthase that produces ATP from ADP in the presence of a proton gradient across the membrane. The A chain is the catalytic subunit. In Thermococcus sibiricus (strain DSM 12597 / MM 739), this protein is A-type ATP synthase subunit A.